A 186-amino-acid polypeptide reads, in one-letter code: Holliday junction branch migration complex subunit RuvA (186 aa).

Positions 1-63 (MNDYINGFLY…DNHFKYYGFF (63 aa)) are domain I. Residues 64–137 (NQLVRDLFEI…QKELFNNKIS (74 aa)) form a domain II region. Position 137 (serine 137) is a region of interest, flexible linker. Positions 137 to 186 (SEKKNKVITSLEKLGYKTKDIYKIIINVDEDLTIDELTKYVLEKLSYINN) are domain III.

Belongs to the RuvA family. In terms of assembly, homotetramer. Forms an RuvA(8)-RuvB(12)-Holliday junction (HJ) complex. HJ DNA is sandwiched between 2 RuvA tetramers; dsDNA enters through RuvA and exits via RuvB. An RuvB hexamer assembles on each DNA strand where it exits the tetramer. Each RuvB hexamer is contacted by two RuvA subunits (via domain III) on 2 adjacent RuvB subunits; this complex drives branch migration. In the full resolvosome a probable DNA-RuvA(4)-RuvB(12)-RuvC(2) complex forms which resolves the HJ.

The protein resides in the cytoplasm. The RuvA-RuvB-RuvC complex processes Holliday junction (HJ) DNA during genetic recombination and DNA repair, while the RuvA-RuvB complex plays an important role in the rescue of blocked DNA replication forks via replication fork reversal (RFR). RuvA specifically binds to HJ cruciform DNA, conferring on it an open structure. The RuvB hexamer acts as an ATP-dependent pump, pulling dsDNA into and through the RuvAB complex. HJ branch migration allows RuvC to scan DNA until it finds its consensus sequence, where it cleaves and resolves the cruciform DNA. This Mycoplasma capricolum subsp. capricolum (strain California kid / ATCC 27343 / NCTC 10154) protein is Holliday junction branch migration complex subunit RuvA.